The following is a 476-amino-acid chain: MNFETIIGLEVHVELKTDSKIFSSSPNHFGAEPNTNTSVIDLGYPGVLPVLNKRAVDFAMKAAMALNCQIATDTKFDRKNYFYPDNPKAYQISQFDKPIGEHGWIEIEVGGKKKRIGITRLHLEEDAGKLTHGTDGHSLVDYNRQGTPLVEIVSEPDIRTPEEAYAYLEKLKAIIQYTGVSDCKMEEGSLRCDANISLRPIGQEAFGTKTELKNLNSFNFVRKGLEYEEKRQEQVLLSGGVIEQETRRYDEAGNKTILMRVKEGSDDYRYFPEPDLVNLYIDDNWKERVRSEIPELPDARKDRYVSELGLPAYDAHVLTLTKEMSDFFEETIREGADAKLASNWLMGEVLAYLNAEQKELQESALTPAGLAGMIKLITSGTISSKIAKKVFKELIENGGDPEQIVKDKGLVQISDEGELRKIVAEVLDANAQSIEDYKNGKDRALGFLVGQMMKATKGKANPQLVNKLLLEEMDKR.

It belongs to the GatB/GatE family. GatB subfamily. Heterotrimer of A, B and C subunits.

The enzyme catalyses L-glutamyl-tRNA(Gln) + L-glutamine + ATP + H2O = L-glutaminyl-tRNA(Gln) + L-glutamate + ADP + phosphate + H(+). It catalyses the reaction L-aspartyl-tRNA(Asn) + L-glutamine + ATP + H2O = L-asparaginyl-tRNA(Asn) + L-glutamate + ADP + phosphate + 2 H(+). Allows the formation of correctly charged Asn-tRNA(Asn) or Gln-tRNA(Gln) through the transamidation of misacylated Asp-tRNA(Asn) or Glu-tRNA(Gln) in organisms which lack either or both of asparaginyl-tRNA or glutaminyl-tRNA synthetases. The reaction takes place in the presence of glutamine and ATP through an activated phospho-Asp-tRNA(Asn) or phospho-Glu-tRNA(Gln). The protein is Aspartyl/glutamyl-tRNA(Asn/Gln) amidotransferase subunit B of Shouchella clausii (strain KSM-K16) (Alkalihalobacillus clausii).